The following is a 573-amino-acid chain: L-lactate dehydrogenase (cytochrome) (573 aa).

A mitochondrion-targeting transit peptide spans 1 to 73; that stretch reads MFKSQLRTAT…LYQKDKFISA (73 aa). A Cytochrome b5 heme-binding domain is found at 80–157; the sequence is DIELTPEIVS…PPEKHLGPLV (78 aa). Histidine 115, histidine 138, and tyrosine 208 together coordinate heme b. The FMN hydroxy acid dehydrogenase domain occupies 182 to 542; it reads PPLSQMINLH…TPELLDTRSI (361 aa). Tyrosine 208 is a binding site for pyruvate. FMN contacts are provided by residues 260–263, serine 290, and glutamine 313; that span reads SATA. Tyrosine 315 serves as a coordination point for pyruvate. Position 341 (threonine 341) interacts with FMN. Lysine 357 contacts heme b. Residue lysine 408 coordinates FMN. Residues histidine 432 and arginine 435 each coordinate pyruvate. FMN contacts are provided by residues 468-472 and 491-492; these read DGGVR and GR.

In the N-terminal section; belongs to the cytochrome b5 family. The protein in the C-terminal section; belongs to the FMN-dependent alpha-hydroxy acid dehydrogenase family. Homotetramer. Requires FMN as cofactor. The cofactor is heme b.

The protein localises to the mitochondrion intermembrane space. The catalysed reaction is (S)-lactate + 2 Fe(III)-[cytochrome c] = 2 Fe(II)-[cytochrome c] + pyruvate + 2 H(+). Its function is as follows. Catalyzes the oxidation of (S)-lactate (L-lactate) to pyruvate with subsequent transfer of electrons to cytochrome c. Is involved in the utilization of (S)-lactate as a sole source of carbon for growth. The chain is L-lactate dehydrogenase (cytochrome) (CYB2) from Wickerhamomyces anomalus (Yeast).